Reading from the N-terminus, the 250-residue chain is 3-deoxy-manno-octulosonate cytidylyltransferase (250 aa).

The protein belongs to the KdsB family.

The protein resides in the cytoplasm. The catalysed reaction is 3-deoxy-alpha-D-manno-oct-2-ulosonate + CTP = CMP-3-deoxy-beta-D-manno-octulosonate + diphosphate. It functions in the pathway nucleotide-sugar biosynthesis; CMP-3-deoxy-D-manno-octulosonate biosynthesis; CMP-3-deoxy-D-manno-octulosonate from 3-deoxy-D-manno-octulosonate and CTP: step 1/1. Its pathway is bacterial outer membrane biogenesis; lipopolysaccharide biosynthesis. Activates KDO (a required 8-carbon sugar) for incorporation into bacterial lipopolysaccharide in Gram-negative bacteria. The chain is 3-deoxy-manno-octulosonate cytidylyltransferase from Legionella pneumophila subsp. pneumophila (strain Philadelphia 1 / ATCC 33152 / DSM 7513).